The sequence spans 330 residues: Phosphate acyltransferase (330 aa).

The protein belongs to the PlsX family. Homodimer. Probably interacts with PlsY.

It is found in the cytoplasm. The enzyme catalyses a fatty acyl-[ACP] + phosphate = an acyl phosphate + holo-[ACP]. The protein operates within lipid metabolism; phospholipid metabolism. Functionally, catalyzes the reversible formation of acyl-phosphate (acyl-PO(4)) from acyl-[acyl-carrier-protein] (acyl-ACP). This enzyme utilizes acyl-ACP as fatty acyl donor, but not acyl-CoA. The protein is Phosphate acyltransferase of Bacillus licheniformis (strain ATCC 14580 / DSM 13 / JCM 2505 / CCUG 7422 / NBRC 12200 / NCIMB 9375 / NCTC 10341 / NRRL NRS-1264 / Gibson 46).